The primary structure comprises 418 residues: Tryptophan synthase beta chain (418 aa).

An N6-(pyridoxal phosphate)lysine modification is found at Lys-109.

It belongs to the TrpB family. As to quaternary structure, tetramer of two alpha and two beta chains. Pyridoxal 5'-phosphate is required as a cofactor.

The catalysed reaction is (1S,2R)-1-C-(indol-3-yl)glycerol 3-phosphate + L-serine = D-glyceraldehyde 3-phosphate + L-tryptophan + H2O. The protein operates within amino-acid biosynthesis; L-tryptophan biosynthesis; L-tryptophan from chorismate: step 5/5. Its function is as follows. The beta subunit is responsible for the synthesis of L-tryptophan from indole and L-serine. The chain is Tryptophan synthase beta chain from Thermus thermophilus (strain ATCC 27634 / DSM 579 / HB8).